Reading from the N-terminus, the 462-residue chain is Glycine--tRNA ligase (462 aa).

Arg-94 and Glu-143 together coordinate substrate. ATP contacts are provided by residues 175 to 177, 185 to 190, 259 to 260, and 308 to 311; these read RNE, FRTCEF, EL, and GLTR. 190–194 contributes to the substrate binding site; that stretch reads FEQME. 304–308 provides a ligand contact to substrate; the sequence is ETSAG.

The protein belongs to the class-II aminoacyl-tRNA synthetase family. In terms of assembly, homodimer.

It localises to the cytoplasm. The enzyme catalyses tRNA(Gly) + glycine + ATP = glycyl-tRNA(Gly) + AMP + diphosphate. Functionally, catalyzes the attachment of glycine to tRNA(Gly). The sequence is that of Glycine--tRNA ligase from Treponema pallidum (strain Nichols).